The sequence spans 476 residues: Sedoheptulokinase (476 aa).

It belongs to the FGGY kinase family.

It localises to the cytoplasm. The enzyme catalyses sedoheptulose + ATP = D-sedoheptulose 7-phosphate + ADP + H(+). Functionally, acts as a modulator of macrophage activation through control of glucose metabolism. This Mus musculus (Mouse) protein is Sedoheptulokinase (Shpk).